The sequence spans 118 residues: UPF0295 protein BcerKBAB4_0454 (118 aa).

Helical transmembrane passes span 12–32 (IRTFALSLVFIGLFIAYLGVF) and 43–63 (FMMVGFLAVIASTVVYFWIGM).

This sequence belongs to the UPF0295 family.

It is found in the cell membrane. This Bacillus mycoides (strain KBAB4) (Bacillus weihenstephanensis) protein is UPF0295 protein BcerKBAB4_0454.